Here is a 311-residue protein sequence, read N- to C-terminus: MGRRPKKRGRDIHGVFLLDKPPGMSSNDIMQKVKRLFQANKAGHTGALDPLATGMLPICLGEATKFSQFLLDADKRYLVTAKLGERTDTSDAEGQLVQTRAVNVNLTEILTALPHFRGDLMQVPTMFSALKHQGKPLYEYARAGVTVQRQARPITIFELKFIDYNAPFLTLEVHCSKGTYIRTLIDDLGEHLGCGAHVVMLRRTAVSDYPAEKMLTWEALQQLAESADLSRLDALLLPTDSAVSKLPPLVLNEQQTKAVGFGQRIRFNNEENIYGQVRLFSAENLFLGVAEINKDNVIRPTRMVNRNNGTE.

Asp49 serves as the catalytic Nucleophile.

It belongs to the pseudouridine synthase TruB family. Type 1 subfamily.

It carries out the reaction uridine(55) in tRNA = pseudouridine(55) in tRNA. In terms of biological role, responsible for synthesis of pseudouridine from uracil-55 in the psi GC loop of transfer RNAs. This chain is tRNA pseudouridine synthase B, found in Actinobacillus succinogenes (strain ATCC 55618 / DSM 22257 / CCUG 43843 / 130Z).